Consider the following 657-residue polypeptide: 1-deoxy-D-xylulose-5-phosphate synthase (657 aa).

Thiamine diphosphate-binding positions include His73 and 113–115 (SHA). Asp145 is a Mg(2+) binding site. Thiamine diphosphate is bound by residues 146–147 (GA), Asn175, Tyr293, and Glu375. A Mg(2+)-binding site is contributed by Asn175.

It belongs to the transketolase family. DXPS subfamily. As to quaternary structure, homodimer. Mg(2+) is required as a cofactor. It depends on thiamine diphosphate as a cofactor.

It catalyses the reaction D-glyceraldehyde 3-phosphate + pyruvate + H(+) = 1-deoxy-D-xylulose 5-phosphate + CO2. It participates in metabolic intermediate biosynthesis; 1-deoxy-D-xylulose 5-phosphate biosynthesis; 1-deoxy-D-xylulose 5-phosphate from D-glyceraldehyde 3-phosphate and pyruvate: step 1/1. Its function is as follows. Catalyzes the acyloin condensation reaction between C atoms 2 and 3 of pyruvate and glyceraldehyde 3-phosphate to yield 1-deoxy-D-xylulose-5-phosphate (DXP). This chain is 1-deoxy-D-xylulose-5-phosphate synthase, found in Pseudarthrobacter chlorophenolicus (strain ATCC 700700 / DSM 12829 / CIP 107037 / JCM 12360 / KCTC 9906 / NCIMB 13794 / A6) (Arthrobacter chlorophenolicus).